The following is a 235-amino-acid chain: 2-C-methyl-D-erythritol 4-phosphate cytidylyltransferase (235 aa).

This sequence belongs to the IspD/TarI cytidylyltransferase family. IspD subfamily. As to quaternary structure, homodimer.

The catalysed reaction is 2-C-methyl-D-erythritol 4-phosphate + CTP + H(+) = 4-CDP-2-C-methyl-D-erythritol + diphosphate. It participates in isoprenoid biosynthesis; isopentenyl diphosphate biosynthesis via DXP pathway; isopentenyl diphosphate from 1-deoxy-D-xylulose 5-phosphate: step 2/6. In terms of biological role, catalyzes the formation of 4-diphosphocytidyl-2-C-methyl-D-erythritol from CTP and 2-C-methyl-D-erythritol 4-phosphate (MEP). This Blochmanniella pennsylvanica (strain BPEN) protein is 2-C-methyl-D-erythritol 4-phosphate cytidylyltransferase.